A 475-amino-acid polypeptide reads, in one-letter code: Equilibrative nucleoside transporter 3 (475 aa).

Over 1–51 (MAFASEDIAYHSSNAVYRVPSNRHEADQEALLGKPLDYPAPGLQRPEDRFN) the chain is Cytoplasmic. Ser21 is modified (phosphoserine). A Dileucine internalization motif motif is present at residues 31–32 (LL). A helical membrane pass occupies residues 52–72 (GAYIIFFCLGIGGLLPWNFFV). Residues 73–105 (TAKEYWAFKLRNCSSPASGKDPEDADILNYFES) lie on the Extracellular side of the membrane. Residue Asn84 is glycosylated (N-linked (GlcNAc...) asparagine). A helical transmembrane segment spans residues 106–126 (YLAVASTVPSLLFLVANFLLV). Over 127–132 (NRIRVH) the chain is Cytoplasmic. The helical transmembrane segment at 133 to 153 (VRVLASLSVSLAIFVVMAVLV) threads the bilayer. The Extracellular portion of the chain corresponds to 154-162 (RVDTSSWTR). The helical transmembrane segment at 163–183 (GFFSIAMACMAIISSSSTIFN) threads the bilayer. Residues 184–199 (SSVYGLTGSFPMRNAQ) are Cytoplasmic-facing. Residues 200-220 (ALISGGAMGGTVSAVASLVDL) form a helical membrane-spanning segment. Topologically, residues 221-230 (AASSDVRDSA) are extracellular. A helical membrane pass occupies residues 231 to 251 (LAFFLTAAVFLGLCVGLYLLL). Over 252–305 (PQLEYARYYMRPVVPIHVFSSEDSPPRDAPSTSSVAPASRAVHTPPLGPILKKT) the chain is Cytoplasmic. Positions 272-291 (SEDSPPRDAPSTSSVAPASR) are disordered. A helical transmembrane segment spans residues 306–326 (AGLGFCAVFLYFITALIFPAI). The Extracellular segment spans residues 327-340 (STNIQPMHKGTGSP). The helical transmembrane segment at 341–361 (WTSKFYVPLTVFLLFNFADLC) threads the bilayer. The Cytoplasmic portion of the chain corresponds to 362–377 (GRQVTAWIQVPGPRSK). Residues 378–398 (LLPILAVSRVCLVPLFLLCNY) form a helical membrane-spanning segment. Residues 399–414 (QPRSHLTLVLFQSDIY) are Extracellular-facing. A helical transmembrane segment spans residues 415-437 (PILFTCLLGLSNGYLSTLVLMYG). The Cytoplasmic segment spans residues 438-450 (PKIVPRELAEATS). Residues 451-471 (VVMLFYMSLGLMLGSACAALL) traverse the membrane as a helical segment. The Extracellular portion of the chain corresponds to 472–475 (EHFI).

This sequence belongs to the SLC29A/ENT transporter (TC 2.A.57) family. Widely expressed. Highest levels in heart and liver (at protein level).

It localises to the lysosome membrane. The protein localises to the late endosome membrane. The protein resides in the mitochondrion membrane. It is found in the cell membrane. The enzyme catalyses adenosine(in) = adenosine(out). The catalysed reaction is guanosine(in) = guanosine(out). It catalyses the reaction inosine(in) = inosine(out). It carries out the reaction uridine(out) = uridine(in). The enzyme catalyses cytidine(in) = cytidine(out). The catalysed reaction is thymidine(in) = thymidine(out). It catalyses the reaction 2'-deoxyadenosine(in) = 2'-deoxyadenosine(out). It carries out the reaction 2'-deoxycytidine(in) = 2'-deoxycytidine(out). The enzyme catalyses guanine(out) = guanine(in). The catalysed reaction is uracil(in) = uracil(out). It catalyses the reaction (R)-noradrenaline(out) = (R)-noradrenaline(in). It carries out the reaction dopamine(out) = dopamine(in). The enzyme catalyses serotonin(out) = serotonin(in). The catalysed reaction is tyramine(in) = tyramine(out). It catalyses the reaction ATP(in) = ATP(out). In terms of biological role, uniporter that mediates the facilitative transport of nucleoside across lysosomal and mitochondrial membranes. Functions as a non-electrogenic Na(+)-independent transporter. Substrate transport is pH-dependent and enhanced under acidic condition, probably reflecting the location of the transporter in acidic intracellular compartments. Proton is not a cotransporting ion but most likely change the ionization state of the transporter which dictates transport-permissible/impermissible conformation for nucleoside translocation. May direct the nucleoside transport from lysosomes to cytosol or cytosol to mitochondria to facilitate the fundamental function of salvage synthesis of nucleic acids. Involved in the transport of nucleosides (adenosine, guanosine, uridine, thymidine, cytidine and inosine) and deoxynucleosides (deoxyadenosine, deoxycytidine). Also mediates transport of purine nucleobases (adenine, guanine) and pyrimidine nucleobases (uracil). Also able to transport monoamine neurotransmitters dopamine, serotonin, noradrenaline and tyramine. Capable of transporting ATP. Mediates nucleoside export from lysosomes in macrophages, which regulates macrophage functions and numbers. This is Equilibrative nucleoside transporter 3 from Rattus norvegicus (Rat).